The chain runs to 699 residues: SPS-sensor serine protease component SSY5 (699 aa).

Disordered stretches follow at residues 1–113 (MVRF…LQGF) and 128–158 (PVKE…ENAR). Residues 1–381 (MVRFFGLNKK…YCVKDYIKKA (381 aa)) constitute a propeptide that is removed on maturation. The segment covering 24–38 (NEQNAAETSSSNVSG) has biased composition (polar residues). The span at 39-51 (NEERIDPNSHDTN) shows a compositional bias: basic and acidic residues. The segment covering 61–78 (STTFGSSIQSSSIFSRGR) has biased composition (low complexity). The segment covering 83–93 (TGASSSMATSE) has biased composition (polar residues). Composition is skewed to low complexity over residues 97–109 (HSSG…NSKN) and 144–154 (SSSTSSTLATS). A serine protease region spans residues 459–699 (FAITCAHVVL…QWDIDPQLDG (241 aa)). Catalysis depends on charge relay system residues H465, D545, and S640.

This sequence belongs to the peptidase S64 family. As to quaternary structure, component of the plasma membrane SPS (SSY1-PTR3-SSY5) amino acid sensor complex. Post-translationally, the propeptide is autoproteolytically cleaved from the catalytic domain but remains associated, forming an inactive protease complex. This processing occurs even in the absence of signaling.

It is found in the cell membrane. Functionally, protease component of the SPS-sensor system, which regulates the expression of several amino acid-metabolizing enzymes and amino acid- and peptide-permeases in response to extracellular amino acid levels by controlling the activity of two transcription factors, STP1 and STP2. Catalyzes the activation of these transcription factors, which are synthesized as latent cytoplasmic precursors, by proteolytic removal of an N-terminal inhibitory domain containing cytoplasmic retention motifs. SSY5 binds as an inactive protease complex to STP1. In response to extracellular amino acids and dependent on the other SPS-sensor components, the inhibitory propeptide is induced to dissociate, and thereby enables the catalytic domain to process STP1. The protein is SPS-sensor serine protease component SSY5 (SSY5) of Saccharomyces cerevisiae (strain ATCC 204508 / S288c) (Baker's yeast).